The primary structure comprises 41 residues: Large ribosomal subunit protein bL36 (41 aa).

It belongs to the bacterial ribosomal protein bL36 family.

This chain is Large ribosomal subunit protein bL36, found in Rhodopseudomonas palustris (strain BisB18).